The following is an 88-amino-acid chain: Small ribosomal subunit protein uS19 (88 aa).

The protein belongs to the universal ribosomal protein uS19 family.

Its function is as follows. Protein S19 forms a complex with S13 that binds strongly to the 16S ribosomal RNA. The polypeptide is Small ribosomal subunit protein uS19 (Mycoplasma mycoides subsp. mycoides SC (strain CCUG 32753 / NCTC 10114 / PG1)).